Reading from the N-terminus, the 160-residue chain is SsrA-binding protein (160 aa).

It belongs to the SmpB family.

It is found in the cytoplasm. Its function is as follows. Required for rescue of stalled ribosomes mediated by trans-translation. Binds to transfer-messenger RNA (tmRNA), required for stable association of tmRNA with ribosomes. tmRNA and SmpB together mimic tRNA shape, replacing the anticodon stem-loop with SmpB. tmRNA is encoded by the ssrA gene; the 2 termini fold to resemble tRNA(Ala) and it encodes a 'tag peptide', a short internal open reading frame. During trans-translation Ala-aminoacylated tmRNA acts like a tRNA, entering the A-site of stalled ribosomes, displacing the stalled mRNA. The ribosome then switches to translate the ORF on the tmRNA; the nascent peptide is terminated with the 'tag peptide' encoded by the tmRNA and targeted for degradation. The ribosome is freed to recommence translation, which seems to be the essential function of trans-translation. The sequence is that of SsrA-binding protein from Pectobacterium carotovorum subsp. carotovorum (strain PC1).